Consider the following 112-residue polypeptide: Protein SMALL AUXIN UP-REGULATED RNA 10 (112 aa).

Belongs to the ARG7 family. As to expression, confined to the veins and petioles of rosette leaves and cauline leaves, and specifically expressed at the abaxial side of inflorescence branche; relocates to both the adaxial (Ad) and abaxial (Ab) sides of the branch in reduced red:far-red (R:FR) light, during shade. Also present in flowers.

It localises to the cell membrane. Functionally, provide a mechanistic link between auxin and plasma membrane H(+)-ATPases (PM H(+)-ATPases, e.g. AHA1 and AHA2), and triggers PM H(+)-ATPases activity by promoting phosphorylation of their C-terminal autoinhibitory domain as a result of PP2C-D subfamily of type 2C phosphatases inhibition, thus leading to the acidification of the apoplast and the facilitation of solutes and water uptake to drive cell expansion. Triggers plant growth probably by promoting cell elongation. Regulates branch angles and bending. The chain is Protein SMALL AUXIN UP-REGULATED RNA 10 from Arabidopsis thaliana (Mouse-ear cress).